The chain runs to 120 residues: Photosystem II extrinsic protein U (120 aa).

The N-terminal stretch at 1–29 (MKRLLSLLTGVLVMTGLLMALIFPQSAYA) is a signal peptide.

The protein belongs to the PsbU family. As to quaternary structure, PSII is composed of 1 copy each of membrane proteins PsbA, PsbB, PsbC, PsbD, PsbE, PsbF, PsbH, PsbI, PsbJ, PsbK, PsbL, PsbM, PsbT, PsbX, PsbY, Psb30/Ycf12, peripheral proteins PsbO, CyanoQ (PsbQ), PsbU, PsbV and a large number of cofactors. It forms dimeric complexes.

The protein resides in the cellular thylakoid membrane. Its function is as follows. One of the extrinsic, lumenal subunits of photosystem II (PSII). PSII is a light-driven water plastoquinone oxidoreductase, using light energy to abstract electrons from H(2)O, generating a proton gradient subsequently used for ATP formation. The extrinsic proteins stabilize the structure of photosystem II oxygen-evolving complex (OEC), the ion environment of oxygen evolution and protect the OEC against heat-induced inactivation. In Prochlorococcus marinus (strain MIT 9313), this protein is Photosystem II extrinsic protein U.